We begin with the raw amino-acid sequence, 623 residues long: Chaperone protein HtpG (623 aa).

Residues 1-328 (MTQEKKKFDA…SEDLPLNISR (328 aa)) form an a; substrate-binding region. The tract at residues 329-544 (ESLQHNSILD…ESAMDIRMER (216 aa)) is b. A c region spans residues 545–623 (FLIEQKQIAN…DIVQKAILSL (79 aa)).

This sequence belongs to the heat shock protein 90 family. In terms of assembly, homodimer.

The protein localises to the cytoplasm. Functionally, molecular chaperone. Has ATPase activity. This Rickettsia canadensis (strain McKiel) protein is Chaperone protein HtpG.